Consider the following 367-residue polypeptide: Peptide chain release factor 2 (367 aa).

Residue glutamine 254 is modified to N5-methylglutamine.

This sequence belongs to the prokaryotic/mitochondrial release factor family. In terms of processing, methylated by PrmC. Methylation increases the termination efficiency of RF2.

It is found in the cytoplasm. In terms of biological role, peptide chain release factor 2 directs the termination of translation in response to the peptide chain termination codons UGA and UAA. This Burkholderia cenocepacia (strain ATCC BAA-245 / DSM 16553 / LMG 16656 / NCTC 13227 / J2315 / CF5610) (Burkholderia cepacia (strain J2315)) protein is Peptide chain release factor 2.